Consider the following 590-residue polypeptide: Rho GTPase-activating protein 36 (590 aa).

The 201-residue stretch at 214–414 (MSLNPIAQQI…AMIDNWDILF (201 aa)) folds into the Rho-GAP domain. The interval 526–590 (IPNNEDTDSD…KGKFATRFFP (65 aa)) is disordered.

As to quaternary structure, may interacts (via the Rho-GAP domain) with the active form of RAC1.

GTPase activator for the Rho-type GTPases by converting them to an inactive GDP-bound state. The protein is Rho GTPase-activating protein 36 (Arhgap36) of Mus musculus (Mouse).